Reading from the N-terminus, the 36-residue chain is U14-myrmicitoxin-Tb1a (36 aa).

An N-terminal signal peptide occupies residues 1–23 (MKIIKLITIFTMMATLMXXVANG). The propeptide occupies 24 to 25 (EP). Glutamine 35 bears the Glutamine amide mark.

Expressed by the venom gland.

Its subcellular location is the secreted. Its function is as follows. Venom protein with unknown function. Does not induce paralysis when a high dose is administered by intrathoracic injection into the blowfly Lucilia caesar. The chain is U14-myrmicitoxin-Tb1a from Tetramorium bicarinatum (Tramp ant).